We begin with the raw amino-acid sequence, 96 residues long: Large ribosomal subunit protein eL21 (96 aa).

A disordered region spans residues M1 to K22.

Belongs to the eukaryotic ribosomal protein eL21 family.

This Methanosphaera stadtmanae (strain ATCC 43021 / DSM 3091 / JCM 11832 / MCB-3) protein is Large ribosomal subunit protein eL21.